The following is a 1288-amino-acid chain: Contactin-associated protein-like 3B (1288 aa).

Residues 1-25 (MASVAWAVLKVLLLLPTQTWSPVGA) form the signal peptide. Residues 23 to 61 (VGAGNPPDCDSPLASALPRSSFSSSSELSSSHGPGFSRL) form a disordered region. The Extracellular segment spans residues 26–1245 (GNPPDCDSPL…LVNADRRDSA (1220 aa)). The region spanning 31 to 177 (CDSPLASALP…IGMRIEVYGC (147 aa)) is the F5/8 type C domain. 6 disulfides stabilise this stretch: C31–C177, C332–C364, C513–C545, C551–C562, C556–C571, and C573–C583. The segment covering 33–59 (SPLASALPRSSFSSSSELSSSHGPGFS) has biased composition (low complexity). 2 Laminin G-like domains span residues 183 to 364 (VVYF…SFSC) and 370 to 545 (VPVT…IDSC). An N-linked (GlcNAc...) asparagine glycan is attached at N359. The region spanning 547–584 (ITDRCLPSYCEHGGECSQSWDTFSCDCLGTGYTGETCH) is the EGF-like 1 domain. One can recognise a Fibrinogen C-terminal domain in the interval 585–792 (SSLYEQSCEA…LLCRGDKSFW (208 aa)). Residue N706 is glycosylated (N-linked (GlcNAc...) asparagine). Residues 793 to 958 (NSASFNTETS…TVTPGVEPGC (166 aa)) form the Laminin G-like 3 domain. 5 disulfides stabilise this stretch: C931–C958, C962–C975, C969–C984, C986–C996, and C1167–C1203. The EGF-like 2 domain occupies 959-997 (AGHCSTYGHLCRNGGRCREKRRGVTCDCAFSAYDGPFCS). A Laminin G-like 4 domain is found at 1016 to 1203 (EHYTLSENSS…RGHVAPMARC (188 aa)). The segment at 1215-1236 (ELAPRLAGGAGRSGPVDEGEPL) is disordered. A helical membrane pass occupies residues 1246 to 1266 (VIGGVIAVEIFILLCITAIAI). Residues 1267–1288 (RIYQQRKLRKENESKVSKKEEC) are Cytoplasmic-facing.

It belongs to the neurexin family.

It is found in the membrane. This chain is Contactin-associated protein-like 3B (CNTNAP3B), found in Homo sapiens (Human).